Consider the following 790-residue polypeptide: Valine--tRNA ligase (790 aa).

The 'HIGH' region motif lies at 40–50 (PTVSGKMHMGH). The short motif at 521-525 (KMSKS) is the 'KMSKS' region element. K524 contributes to the ATP binding site.

This sequence belongs to the class-I aminoacyl-tRNA synthetase family. ValS type 2 subfamily.

The protein localises to the cytoplasm. The enzyme catalyses tRNA(Val) + L-valine + ATP = L-valyl-tRNA(Val) + AMP + diphosphate. In terms of biological role, catalyzes the attachment of valine to tRNA(Val). As ValRS can inadvertently accommodate and process structurally similar amino acids such as threonine, to avoid such errors, it has a 'posttransfer' editing activity that hydrolyzes mischarged Thr-tRNA(Val) in a tRNA-dependent manner. This chain is Valine--tRNA ligase, found in Thermoplasma volcanium (strain ATCC 51530 / DSM 4299 / JCM 9571 / NBRC 15438 / GSS1).